We begin with the raw amino-acid sequence, 51 residues long: MERAGVPGFSPRRSSVEAKMQSTSCSVRKSSTVTAWPAVVLLLSWGQRRGG.

The tract at residues 1 to 22 (MERAGVPGFSPRRSSVEAKMQS) is disordered.

In terms of assembly, interacts with aquaporin AQP2.

In terms of biological role, reduces filamentous actin fibers by interacting with aquaporin AQP2 which leads to inhibition of the expression of SEPTIN4 and integrin ITGB4. Also inhibits the activation of the EREG/EGFR signaling pathway through interaction with AQP2. The protein is Micropeptide inhibiting actin cytoskeleton of Homo sapiens (Human).